The primary structure comprises 730 residues: Catalase-peroxidase (730 aa).

A cross-link (tryptophyl-tyrosyl-methioninium (Trp-Tyr) (with M-244)) is located at residues 95 to 218; it reads WHSAGTYRVG…LAAVQMGLIY (124 aa). His-96 functions as the Proton acceptor in the catalytic mechanism. The tryptophyl-tyrosyl-methioninium (Tyr-Met) (with W-95) cross-link spans 218 to 244; that stretch reads YVNPEGPNGNPDPLGSAHDVRETFARM. His-259 is a binding site for heme b.

The protein belongs to the peroxidase family. Peroxidase/catalase subfamily. As to quaternary structure, homodimer or homotetramer. It depends on heme b as a cofactor. In terms of processing, formation of the three residue Trp-Tyr-Met cross-link is important for the catalase, but not the peroxidase activity of the enzyme.

It catalyses the reaction H2O2 + AH2 = A + 2 H2O. The catalysed reaction is 2 H2O2 = O2 + 2 H2O. Its function is as follows. Bifunctional enzyme with both catalase and broad-spectrum peroxidase activity. This is Catalase-peroxidase from Clostridium botulinum (strain Eklund 17B / Type B).